A 93-amino-acid chain; its full sequence is Phosphoribosyl-ATP pyrophosphatase (93 aa).

It belongs to the PRA-PH family.

The protein resides in the cytoplasm. It catalyses the reaction 1-(5-phospho-beta-D-ribosyl)-ATP + H2O = 1-(5-phospho-beta-D-ribosyl)-5'-AMP + diphosphate + H(+). Its pathway is amino-acid biosynthesis; L-histidine biosynthesis; L-histidine from 5-phospho-alpha-D-ribose 1-diphosphate: step 2/9. The chain is Phosphoribosyl-ATP pyrophosphatase from Mycolicibacterium gilvum (strain PYR-GCK) (Mycobacterium gilvum (strain PYR-GCK)).